A 500-amino-acid polypeptide reads, in one-letter code: Hepatic triacylglycerol lipase (500 aa).

The N-terminal stretch at methionine 1–alanine 21 is a signal peptide. A disordered region spans residues glycine 23–proline 44. N-linked (GlcNAc...) asparagine glycans are attached at residues asparagine 67 and asparagine 78. Serine 168 serves as the catalytic Nucleophile. Aspartate 194 (charge relay system) is an active-site residue. The essential for determining substrate specificity stretch occupies residues cysteine 254–cysteine 277. The Charge relay system role is filled by histidine 279. Residues tyrosine 353–arginine 487 form the PLAT domain. 2 N-linked (GlcNAc...) asparagine glycosylation sites follow: asparagine 363 and asparagine 398.

Belongs to the AB hydrolase superfamily. Lipase family. Homodimer.

The protein resides in the secreted. It catalyses the reaction a triacylglycerol + H2O = a diacylglycerol + a fatty acid + H(+). The enzyme catalyses a 1-acyl-sn-glycero-3-phosphocholine + H2O = sn-glycerol 3-phosphocholine + a fatty acid + H(+). The catalysed reaction is a 1,2-diacyl-sn-glycero-3-phosphocholine + H2O = a 2-acyl-sn-glycero-3-phosphocholine + a fatty acid + H(+). It carries out the reaction 1,2,3-tri-(9Z-octadecenoyl)-glycerol + H2O = di-(9Z)-octadecenoylglycerol + (9Z)-octadecenoate + H(+). It catalyses the reaction 1,2-di-(9Z-octadecenoyl)-sn-glycero-3-phosphocholine + H2O = (9Z-octadecenoyl)-sn-glycero-3-phosphocholine + (9Z)-octadecenoate + H(+). The enzyme catalyses 1,2,3-tributanoylglycerol + H2O = dibutanoylglycerol + butanoate + H(+). The catalysed reaction is 1,2-dihexadecanoyl-sn-glycero-3-phosphocholine + H2O = hexadecanoyl-sn-glycero-3-phosphocholine + hexadecanoate + H(+). It carries out the reaction 1,2-di-(9Z-octadecenoyl)-sn-glycerol + H2O = 2-(9Z-octadecenoyl)-glycerol + (9Z)-octadecenoate + H(+). It catalyses the reaction 1,2,3-tri-(9Z-octadecenoyl)-glycerol + H2O = 2,3-di-(9Z)-octadecenoyl-sn-glycerol + (9Z)-octadecenoate + H(+). The enzyme catalyses 1-(9Z-octadecenoyl)-sn-glycero-3-phospho-L-serine + H2O = sn-glycero-3-phospho-L-serine + (9Z)-octadecenoate + H(+). The catalysed reaction is 1-hexadecanoyl-sn-glycero-3-phosphocholine + H2O = sn-glycerol 3-phosphocholine + hexadecanoate + H(+). It carries out the reaction 1,3-di-(9Z-octadecenoyl)-glycerol + H2O = 3-(9Z-octadecenoyl)-sn-glycerol + (9Z)-octadecenoate + H(+). Catalyzes the hydrolysis of triglycerides and phospholipids present in circulating plasma lipoproteins, including chylomicrons, intermediate density lipoproteins (IDL), low density lipoproteins (LDL) of large size and high density lipoproteins (HDL), releasing free fatty acids (FFA) and smaller lipoprotein particles. Also exhibits lysophospholipase activity. Can hydrolyze both neutral lipid and phospholipid substrates but shows a greater binding affinity for neutral lipid substrates than phospholipid substrates. In native LDL, preferentially hydrolyzes the phosphatidylcholine species containing polyunsaturated fatty acids at sn-2 position. This is Hepatic triacylglycerol lipase (LIPC) from Bos taurus (Bovine).